A 236-amino-acid polypeptide reads, in one-letter code: Elastase-1 (236 aa).

The Peptidase S1 domain maps to 1–236 (VVGGRVAQPN…AYISWMNGIM (236 aa)). Cys-30 and Cys-46 are joined by a disulfide. His-45 (charge relay system) is an active-site residue. Ca(2+) contacts are provided by Glu-59, Asn-61, Thr-64, Glu-66, and Glu-69. Asp-93 functions as the Charge relay system in the catalytic mechanism. 3 disulfide bridges follow: Cys-127–Cys-193, Cys-158–Cys-174, and Cys-183–Cys-213. Ser-187 (charge relay system) is an active-site residue.

This sequence belongs to the peptidase S1 family. Elastase subfamily. Ca(2+) is required as a cofactor. In terms of tissue distribution, pancreas.

Its subcellular location is the secreted. The enzyme catalyses Hydrolysis of proteins, including elastin. Preferential cleavage: Ala-|-Xaa.. Functionally, acts upon elastin. In Salmo salar (Atlantic salmon), this protein is Elastase-1.